The sequence spans 234 residues: Covalently-linked cell wall protein 14 (234 aa).

Positions 1-22 are cleaved as a signal peptide; the sequence is MASFLKISTLIAIVSTLQTTLA. The region spanning 23 to 109 is the CFEM domain; the sequence is APPACLLACV…SSEESSASAS (87 aa). 4 disulfide bridges follow: Cys27–Cys66, Cys31–Cys61, Cys41–Cys49, and Cys51–Cys82. Position 46 (Asp46) interacts with heme. Residues 86–207 are compositionally biased toward low complexity; sequence SSQSSSSESE…ASSSESTTAT (122 aa). The tract at residues 86–208 is disordered; it reads SSQSSSSESE…SSSESTTATG (123 aa). The GPI-anchor amidated glycine moiety is linked to residue Gly215. Positions 216–234 are cleaved as a propeptide — removed in mature form; the sequence is SAAKVGLGALVGLVGAVLL.

It belongs to the CCW14 family. In terms of processing, the GPI-anchor is attached to the protein in the endoplasmic reticulum and serves to target the protein to the cell surface. There, the glucosamine-inositol phospholipid moiety is cleaved off and the GPI-modified mannoprotein is covalently attached via its lipidless GPI glycan remnant to the 1,6-beta-glucan of the outer cell wall layer.

It is found in the secreted. It localises to the cell wall. Its subcellular location is the membrane. Its function is as follows. Beta-glucan associated cell wall protein involved in cell wall structure. May serve as cross-linking or coat-forming wall protein. This chain is Covalently-linked cell wall protein 14 (SSR1), found in Candida albicans (strain SC5314 / ATCC MYA-2876) (Yeast).